Reading from the N-terminus, the 410-residue chain is Neuroserpin (410 aa).

Positions 1 to 16 (MTYLELLALLALQSVV) are cleaved as a signal peptide. Asn-157, Asn-321, and Asn-401 each carry an N-linked (GlcNAc...) asparagine glycan. Residue Ser-403 is glycosylated (O-linked (Xyl...) (chondroitin sulfate) serine).

Belongs to the serpin family. In terms of tissue distribution, detected in neurons in embryonic brain cortex (at protein level). During embryonic development mostly expressed in CNS. In adult expressed in brain and much less in spinal cord, heart, kidney and testis.

Its subcellular location is the secreted. It localises to the cytoplasmic vesicle. It is found in the secretory vesicle lumen. The protein localises to the perikaryon. In terms of biological role, serine protease inhibitor that inhibits plasminogen activators and plasmin but not thrombin. May be involved in the formation or reorganization of synaptic connections as well as for synaptic plasticity in the adult nervous system. May protect neurons from cell damage by tissue-type plasminogen activator. The sequence is that of Neuroserpin (Serpini1) from Mus musculus (Mouse).